Consider the following 267-residue polypeptide: MENRNLQDAKRIVVKVGTSSLIRANGKINLQAIDELCYTLSGLVNEDKEVVLVSSGAVGVGLANMGLVQRPKQIPEQQALAAIGQSQLMTIYQQRFAMYSQKTSQILLTHDVLTYPESRENVLNTFNELLKWKVIPVVNENDTVAVDEMDHQTSFGDNDWLSAVVASGIDADLLIVLSDIDGLFNKNPKKYADANLISEVTEINEKITGAAGGTGSRFGTGGMATKIKAMDRMINEGRKAVLANGKRPSIIFEILNGKQIGTLFHKK.

Lysine 15 serves as a coordination point for ATP. Residues serine 55, aspartate 142, and asparagine 158 each contribute to the substrate site. Residues 178–179 (SD) and 220–226 (TGGMATK) contribute to the ATP site.

Belongs to the glutamate 5-kinase family.

Its subcellular location is the cytoplasm. It carries out the reaction L-glutamate + ATP = L-glutamyl 5-phosphate + ADP. It participates in amino-acid biosynthesis; L-proline biosynthesis; L-glutamate 5-semialdehyde from L-glutamate: step 1/2. Its function is as follows. Catalyzes the transfer of a phosphate group to glutamate to form L-glutamate 5-phosphate. In Ligilactobacillus salivarius (strain UCC118) (Lactobacillus salivarius), this protein is Glutamate 5-kinase.